The following is an 877-amino-acid chain: Alanine--tRNA ligase (877 aa).

Zn(2+) is bound by residues histidine 567, histidine 571, cysteine 669, and histidine 673.

It belongs to the class-II aminoacyl-tRNA synthetase family. Zn(2+) is required as a cofactor.

The protein resides in the cytoplasm. It carries out the reaction tRNA(Ala) + L-alanine + ATP = L-alanyl-tRNA(Ala) + AMP + diphosphate. In terms of biological role, catalyzes the attachment of alanine to tRNA(Ala) in a two-step reaction: alanine is first activated by ATP to form Ala-AMP and then transferred to the acceptor end of tRNA(Ala). Also edits incorrectly charged Ser-tRNA(Ala) and Gly-tRNA(Ala) via its editing domain. The chain is Alanine--tRNA ligase from Rickettsia prowazekii (strain Madrid E).